We begin with the raw amino-acid sequence, 305 residues long: Olfactory receptor 9G1 (305 aa).

The Extracellular portion of the chain corresponds to 1-24 (MQRSNHTVTEFILLGFTTDPGMQL). Asn-5 carries an N-linked (GlcNAc...) asparagine glycan. A helical transmembrane segment spans residues 25 to 45 (GLFVVFLGVYSLTVVGNSTLI). The Cytoplasmic portion of the chain corresponds to 46–53 (VLICNDSC). A helical transmembrane segment spans residues 54–74 (LHTPMYFFTGNLSFLDLWYSS). Topologically, residues 75–98 (VYTPKILVTCISEDKSISFAGCLC) are extracellular. A disulfide bridge connects residues Cys-96 and Cys-188. A helical transmembrane segment spans residues 99–119 (QFFFSAGLAYSECYLLAAVAY). Residues 120–138 (DRYVAISKPLLYAQAMSIK) lie on the Cytoplasmic side of the membrane. The helical transmembrane segment at 139–159 (LCALLVAVSYCGGFINSSIIT) threads the bilayer. The Extracellular segment spans residues 160 to 196 (KKTFSFNFCRENIIDDFFCDLLPLVELACGEKGGYKI). A helical transmembrane segment spans residues 197–216 (MMYFLLASNVICPAVLILAS). Topologically, residues 217-236 (YLFIITSVLRISSSKGYLKA) are cytoplasmic. A helical membrane pass occupies residues 237-257 (FSTCSSHLTSVTLYYGSILYI). The Extracellular segment spans residues 258-270 (YALPRSSYSFDMD). The chain crosses the membrane as a helical span at residues 271-291 (KIVSTFYTVVFPMLNLMIYSL). Residues 292–305 (RNKDVKEALKKLLP) are Cytoplasmic-facing.

The protein belongs to the G-protein coupled receptor 1 family.

The protein resides in the cell membrane. Odorant receptor. The protein is Olfactory receptor 9G1 (OR9G1) of Homo sapiens (Human).